The primary structure comprises 276 residues: Zinc transporter ZTP29 (276 aa).

The Cytoplasmic segment spans residues 1 to 6; sequence MDSQML. A helical membrane pass occupies residues 7–27; that stretch reads VALGLSLVGGLSTSLGALFVV. Residues 28–35 are Lumenal-facing; the sequence is LSETPNMK. A helical membrane pass occupies residues 36–56; that stretch reads MLGLLQGFASGLMLSISFLDL. Residues 57–63 lie on the Cytoplasmic side of the membrane; sequence AHNAINS. The helical transmembrane segment at 64–84 threads the bilayer; the sequence is IGFFKANLWFFGGVIFFACIT. Residues 85 to 123 lie on the Lumenal side of the membrane; that stretch reads KFIPEPTLGPSTDGKRRKKNGDEGGKDMMKKHRKQVLYS. Residues 124–144 traverse the membrane as a helical segment; sequence GLITAIGISLHNFPEGMAVFL. The Cytoplasmic segment spans residues 145–156; it reads GSIKGMRVGVNL. The helical transmembrane segment at 157–177 threads the bilayer; the sequence is ALAIALHNIPEGVAVALPIYF. Residues 178-187 are Lumenal-facing; sequence ATESKWQAFK. A helical membrane pass occupies residues 188 to 208; it reads LATLSGLAEPLGVIIVAYLFP. Residues 209–219 lie on the Cytoplasmic side of the membrane; that stretch reads RSLSPEILEGL. A helical transmembrane segment spans residues 220–240; it reads LGAVGGIMAFLTLHEMLPLAF. Topologically, residues 241 to 250 are lumenal; sequence DYAGQKQAVK. A helical membrane pass occupies residues 251 to 271; it reads AVFFGMACMSASLYFLELSLP. The Cytoplasmic portion of the chain corresponds to 272-276; that stretch reads ETMSL.

The protein belongs to the ZIP transporter (TC 2.A.5) family. ZupT subfamily. Expressed in hypocotyls, cotyledons, leaves and anthers.

It localises to the endoplasmic reticulum membrane. Its function is as follows. Zinc transporter involved response to salt stress. May act through the regulation of zinc levels required to induce the unfolded protein response (UPR) pathway. The sequence is that of Zinc transporter ZTP29 (ZTP29) from Arabidopsis thaliana (Mouse-ear cress).